The primary structure comprises 139 residues: D-ribose pyranase (139 aa).

Histidine 20 serves as the catalytic Proton donor. Substrate is bound by residues aspartate 28, histidine 106, and phenylalanine 128–asparagine 130.

The protein belongs to the RbsD / FucU family. RbsD subfamily. In terms of assembly, homodecamer.

It is found in the cytoplasm. The enzyme catalyses beta-D-ribopyranose = beta-D-ribofuranose. Its pathway is carbohydrate metabolism; D-ribose degradation; D-ribose 5-phosphate from beta-D-ribopyranose: step 1/2. In terms of biological role, catalyzes the interconversion of beta-pyran and beta-furan forms of D-ribose. The chain is D-ribose pyranase from Yersinia enterocolitica serotype O:8 / biotype 1B (strain NCTC 13174 / 8081).